Here is a 531-residue protein sequence, read N- to C-terminus: MQDLGIISPGLEEFRELAAHSRVIPVRLKVLADAETPIGLYRKLAQGQPGTFLMESAAVGGAWSRYSFIGSRSRATLTTKDGQAHWLGEPPAGVPVDGNPVDAIRDTIEALRTDRFDGLPPFTSGLVGFLGWETVRHWEKLTRPPEDDLQLPELALNLVTDMAVHDNMDGTVLLIANAINFDNSSERVDEAWHDAVARVKELLARISTPVLQPVSVLEPAALDFAASVQERWNEPEYLAALDRGKEAIVDGEVFQVVISRRFEMECGASPLDVYRVLRNTNPSPYMYIFSLEDAAGRQYSIVGSSPEALVTVTGEDVITHPIAGSRPRGKTVDADKALAEELLADQKERAEHLMLVDLSRNDLSKVCVAGSVDVTQFMEVERFSHIMHLVSTVVGRLAPTAKAYDVLKATFPAGTLSGAPKPRALRLLDELEPHRRGIYGGVVGYLDFAGDMDMAIAIRSALLREGRAYVQAGGGIVADSSNPAEAQETVNKAAAPLRAVHTAGSLHNITPDSVSAPDSVSSPDSVTEANS.

L-tryptophan is bound by residues S56 and 284–286 (PYM). 324 to 325 (GS) is a binding site for chorismate. E351 provides a ligand contact to Mg(2+). Residues Y439, R459, 473–475 (GGG), and G475 contribute to the chorismate site. E488 lines the Mg(2+) pocket. The interval 506–531 (LHNITPDSVSAPDSVSSPDSVTEANS) is disordered. A compositionally biased stretch (low complexity) spans 511 to 531 (PDSVSAPDSVSSPDSVTEANS).

The protein belongs to the anthranilate synthase component I family. Heterotetramer consisting of two non-identical subunits: a beta subunit (TrpG) and a large alpha subunit (TrpE). Mg(2+) serves as cofactor.

The catalysed reaction is chorismate + L-glutamine = anthranilate + pyruvate + L-glutamate + H(+). Its pathway is amino-acid biosynthesis; L-tryptophan biosynthesis; L-tryptophan from chorismate: step 1/5. Feedback inhibited by tryptophan. Its function is as follows. Part of a heterotetrameric complex that catalyzes the two-step biosynthesis of anthranilate, an intermediate in the biosynthesis of L-tryptophan. In the first step, the glutamine-binding beta subunit (TrpG) of anthranilate synthase (AS) provides the glutamine amidotransferase activity which generates ammonia as a substrate that, along with chorismate, is used in the second step, catalyzed by the large alpha subunit of AS (TrpE) to produce anthranilate. In the absence of TrpG, TrpE can synthesize anthranilate directly from chorismate and high concentrations of ammonia. In Arthrobacter globiformis, this protein is Anthranilate synthase component 1 (trpE).